Here is a 479-residue protein sequence, read N- to C-terminus: Preferentially expressed antigen in melanoma-like protein 7 (479 aa).

One copy of the LRR 1; degenerate repeat lies at 96 to 124 (MGRLKKVDFRDAQHHASLDMQDEREGRDY). Residues 179 to 203 (HLCCEKLEIGAVEVSKVRNVLKFLQ) form an LRR 2; degenerate repeat. One copy of the LRR 3; degenerate repeat lies at 204–230 (PELIKELKLNTVGNLSKLAKFVPFIRK). One copy of the LRR 4; degenerate repeat lies at 231–265 (MRNLQKLMLVRTFGTRTFTQEEKQNISKIISLFCK). 5 LRR repeats span residues 266–291 (LSCL…LRCL), 292–323 (EAPL…SQLK), 324–347 (HLCL…LKRV), 348–375 (AANL…ALIK), and 376–400 (CTQL…FLHR).

The protein belongs to the PRAME family. As to quaternary structure, interacts with UHRF1. As to expression, seems to be specific to pluripotent tissues in the early embryo. Not detected in somatic tissues.

Its function is as follows. Promotes maintenance and self-renewal of pluripotent embryonic stem cells (ESCs), downstream of LIF/STAT3. Maintains the pluripotency state of ESCs by repressing DNA methylation through the regulation of UHRF1 stability. Mediates the proteasomal degradation of UHRF1. Is required for the establishment of the blastocyst. In Mus musculus (Mouse), this protein is Preferentially expressed antigen in melanoma-like protein 7.